A 394-amino-acid polypeptide reads, in one-letter code: Na(+)/H(+) antiporter NhaA (394 aa).

Transmembrane regions (helical) follow at residues 14-34 (AGGL…NSAL), 59-79 (LLLW…GLEV), 95-115 (VFPA…YLLF), 125-145 (GWAI…ALLG), 154-174 (VFLL…IALF), 179-199 (VSLQ…YMNW), 213-233 (LVLW…GVIV), 254-274 (GLHP…NAGV), 292-312 (IATG…WLAV), 328-348 (IFAV…IASL), and 363-383 (LGIL…LRLV).

It belongs to the NhaA Na(+)/H(+) (TC 2.A.33) antiporter family.

The protein localises to the cell inner membrane. It catalyses the reaction Na(+)(in) + 2 H(+)(out) = Na(+)(out) + 2 H(+)(in). Functionally, na(+)/H(+) antiporter that extrudes sodium in exchange for external protons. This is Na(+)/H(+) antiporter NhaA from Yersinia pseudotuberculosis serotype O:1b (strain IP 31758).